The chain runs to 615 residues: Erythritol-mannosyl-transferase 1 (615 aa).

The interval 366 to 387 is disordered; sequence RTPNNTGASTPTAPISSPDFEE. A compositionally biased stretch (polar residues) spans 367-380; that stretch reads TPNNTGASTPTAPI.

The protein belongs to the UDP-glycosyltransferase family.

The protein localises to the vacuole membrane. Its pathway is secondary metabolite biosynthesis. Functionally, erythritol-mannosyl-transferase; part of the gene cluster that mediates the biosynthesis of mannosylerythritol lipids (MELs), surface-active substances that enhance the availability of water-insoluble substrates. Mannosylerythritol lipid production is responsible for hemolytic activity of Ustilago maydis. Depending on the number of acetyl groups, mannosylerythritol lipids can be differentiated into MEL A (fully acetylated), MEL B and MEL C (monoacetylated at R-6 and R-4, respectively), and the fully deacetylated MEL D. The first step in the pathway is the generation of mannosylerythritol by the glycosyltransferase EMT1 which catalyzes the transfer of GDP-mannose to the C-4 atom of meso-erythritol. This reaction has to be stereospecific, since only mannosyl-D-erythritol is generated. The produced disaccharide is subsequently acylated with fatty acids of various lengths derived from the peroxisomal beta-oxidation by the peroxisomal acyltransferases MAC1 and MAC2 at positions C-2 and C-3, repectively. The existence of MEL derivatives which carry an acetyl group at C-2 implies that at least MAC1 also accepts acetyl-CoA as a donor. The final step of MEL biosynthesis is the acetylation of the fully acylated mannosylerythritol lipids catalyzed by the acetyl-CoA-dependent acetyltransferase MAT1. MAT1 displays a relaxed regioselectivity and is able to transfer acetylgroups to both positions C-4 and C-6 of the mannosyl moiety. This Mycosarcoma maydis (Corn smut fungus) protein is Erythritol-mannosyl-transferase 1.